A 152-amino-acid chain; its full sequence is Ubiquitin-activating enzyme E1 Y (152 aa).

Residue cysteine 51 is the Glycyl thioester intermediate of the active site.

This sequence belongs to the ubiquitin-activating E1 family. As to quaternary structure, monomer.

The enzyme catalyses ATP + ubiquitin + [E1 ubiquitin-activating enzyme]-L-cysteine = AMP + diphosphate + S-ubiquitinyl-[E1 ubiquitin-activating enzyme]-L-cysteine.. It functions in the pathway protein modification; protein ubiquitination. Its function is as follows. Activates ubiquitin by first adenylating its C-terminal glycine residue with ATP, and thereafter linking this residue to the side chain of a cysteine residue in E1, yielding a ubiquitin-E1 thioester and free AMP. The Y chromosome form could be involved in the survival and proliferation of differentiating spermatogonia. This Osphranter rufus (Red kangaroo) protein is Ubiquitin-activating enzyme E1 Y (UBE1Y).